Reading from the N-terminus, the 503-residue chain is Potassium voltage-gated channel subfamily V member 1 (503 aa).

Disordered regions lie at residues M1–S20 and K171–C192. Residues L3–R213 lie on the Cytoplasmic side of the membrane. A compositionally biased stretch (low complexity) spans L10 to S20. The span at K171–F187 shows a compositional bias: basic and acidic residues. A helical membrane pass occupies residues I214–S234. Residues A235–N241 are Extracellular-facing. The helical transmembrane segment at L242–L262 threads the bilayer. Residues R263 to N279 lie on the Cytoplasmic side of the membrane. A helical membrane pass occupies residues I280–G300. At S301–R312 the chain is on the extracellular side. A helical; Voltage-sensor membrane pass occupies residues L313–G334. Topologically, residues L335 to E348 are cytoplasmic. A helical transmembrane segment spans residues V349–F369. The Selectivity filter signature appears at T395–D400. The helical transmembrane segment at I410 to I430 threads the bilayer. Residues N431–F503 are Cytoplasmic-facing.

The protein belongs to the potassium channel family. V (TC 1.A.1.2) subfamily. Kv8.1/KCNV1 sub-subfamily. Heteromultimer with KCNB1 and KCNB2. Interacts with KCNC4 and KCND1.

Its subcellular location is the cell membrane. Functionally, potassium channel subunit that does not form functional channels by itself. Modulates KCNB1 and KCNB2 channel activity by shifting the threshold for inactivation to more negative values and by slowing the rate of inactivation. Can down-regulate the channel activity of KCNB1, KCNB2, KCNC4 and KCND1, possibly by trapping them in intracellular membranes. The sequence is that of Potassium voltage-gated channel subfamily V member 1 (Kcnv1) from Mus musculus (Mouse).